The chain runs to 144 residues: Large ribosomal subunit protein uL15 (144 aa).

The interval 1–53 (MRLNTLSPAEGAKHSAKRLGRGIGSGLGKTGGRGHKGQKSRTGGGVRRGFEGG) is disordered. The span at 21 to 31 (RGIGSGLGKTG) shows a compositional bias: gly residues.

This sequence belongs to the universal ribosomal protein uL15 family. In terms of assembly, part of the 50S ribosomal subunit.

Binds to the 23S rRNA. This Haemophilus influenzae (strain ATCC 51907 / DSM 11121 / KW20 / Rd) protein is Large ribosomal subunit protein uL15.